The primary structure comprises 131 residues: Large-conductance mechanosensitive channel (131 aa).

3 helical membrane passes run 8–28 (FAMRGNVVDLAVGVIIGGAFG), 30–50 (IVSSLVNDILMPLVGLLLGGV), and 67–87 (GMFIQTVVDFFIISFSIFVFV).

It belongs to the MscL family. In terms of assembly, homopentamer.

Its subcellular location is the cell membrane. In terms of biological role, channel that opens in response to stretch forces in the membrane lipid bilayer. May participate in the regulation of osmotic pressure changes within the cell. This chain is Large-conductance mechanosensitive channel, found in Geobacillus sp. (strain WCH70).